Consider the following 610-residue polypeptide: Replication protein E1 (610 aa).

The Nuclear localization signal motif lies at 83-85; the sequence is KRK. A phosphoserine; by host mark is found at Ser93 and Ser102. The Nuclear export signal motif lies at 101–110; the sequence is LSPRLEAVTI. The DNA-binding region stretch occupies residues 148–312; the sequence is ESGTLVVETD…MLDHESAASS (165 aa). The 151-residue stretch at 411–561 folds into the SF3 helicase domain; that stretch reads VNFISFLCAL…LPLKENDEVL (151 aa). 437-444 serves as a coordination point for ATP; it reads GPPDTGKS. A Glycyl lysine isopeptide (Lys-Gly) (interchain with G-Cter in SUMO) cross-link involves residue Lys518. The interval 591 to 610 is disordered; it reads ESGRSDRAFRCTAGTNTESI.

The protein belongs to the papillomaviridae E1 protein family. Can form hexamers. Interacts with E2 protein; this interaction increases E1 DNA binding specificity. Interacts with host DNA polymerase subunit POLA2. Interacts with host single stranded DNA-binding protein RPA1. Interacts with host TOP1; this interaction stimulates the enzymatic activity of TOP1. In terms of processing, phosphorylated. Post-translationally, sumoylated.

Its subcellular location is the host nucleus. It catalyses the reaction Couples ATP hydrolysis with the unwinding of duplex DNA by translocating in the 3'-5' direction.. It carries out the reaction ATP + H2O = ADP + phosphate + H(+). Its function is as follows. ATP-dependent DNA 3'-5' helicase required for initiation of viral DNA replication. It forms a complex with the viral E2 protein. The E1-E2 complex binds to the replication origin which contains binding sites for both proteins. During the initial step, a dimer of E1 interacts with a dimer of protein E2 leading to a complex that binds the viral origin of replication with high specificity. Then, a second dimer of E1 displaces the E2 dimer in an ATP-dependent manner to form the E1 tetramer. Following this, two E1 monomers are added to each half of the site, which results in the formation of two E1 trimers on the viral ori. Subsequently, two hexamers will be created. The double hexamer acts as a bi-directional helicase machinery and unwinds the viral DNA and then recruits the host DNA polymerase to start replication. This chain is Replication protein E1, found in Human papillomavirus type 60.